Consider the following 417-residue polypeptide: Serine hydroxymethyltransferase 2 (417 aa).

Residues leucine 121 and 125-127 (GHL) each bind (6S)-5,6,7,8-tetrahydrofolate. Lysine 230 carries the post-translational modification N6-(pyridoxal phosphate)lysine. 355–357 (SPF) is a binding site for (6S)-5,6,7,8-tetrahydrofolate.

Belongs to the SHMT family. Homodimer. The cofactor is pyridoxal 5'-phosphate.

The protein resides in the cytoplasm. It catalyses the reaction (6R)-5,10-methylene-5,6,7,8-tetrahydrofolate + glycine + H2O = (6S)-5,6,7,8-tetrahydrofolate + L-serine. The protein operates within one-carbon metabolism; tetrahydrofolate interconversion. Its pathway is amino-acid biosynthesis; glycine biosynthesis; glycine from L-serine: step 1/1. Catalyzes the reversible interconversion of serine and glycine with tetrahydrofolate (THF) serving as the one-carbon carrier. This reaction serves as the major source of one-carbon groups required for the biosynthesis of purines, thymidylate, methionine, and other important biomolecules. Also exhibits THF-independent aldolase activity toward beta-hydroxyamino acids, producing glycine and aldehydes, via a retro-aldol mechanism. The protein is Serine hydroxymethyltransferase 2 of Pseudomonas syringae pv. syringae (strain B728a).